The primary structure comprises 234 residues: Endonuclease V (234 aa).

Residues aspartate 36 and aspartate 104 each contribute to the Mg(2+) site.

It belongs to the endonuclease V family. Mg(2+) serves as cofactor.

The protein localises to the cytoplasm. The catalysed reaction is Endonucleolytic cleavage at apurinic or apyrimidinic sites to products with a 5'-phosphate.. In terms of biological role, DNA repair enzyme involved in the repair of deaminated bases. Selectively cleaves double-stranded DNA at the second phosphodiester bond 3' to a deoxyinosine leaving behind the intact lesion on the nicked DNA. The protein is Endonuclease V of Yersinia pestis.